The sequence spans 3623 residues: Cubilin (3623 aa).

Positions 1-20 (MSSQFLWGFVTLLMIAELDG) are cleaved as a signal peptide. Residues 21 to 32 (KTGKPEQRGQKR) constitute a propeptide, removed in mature form. Positions 39-46 (PRMTTEEG) are interaction with AMN. Residue asparagine 95 is glycosylated (N-linked (GlcNAc...) asparagine). An EGF-like 1 domain is found at 129-165 (ERKVCSSNPCLNGGTCVNLHDSFVCICPSQWKGLFCS). Intrachain disulfides connect cysteine 133/cysteine 144, cysteine 138/cysteine 153, cysteine 155/cysteine 164, cysteine 171/cysteine 187, cysteine 181/cysteine 196, cysteine 198/cysteine 207, cysteine 264/cysteine 277, cysteine 271/cysteine 286, and cysteine 289/cysteine 300. In terms of domain architecture, EGF-like 2; calcium-binding spans 167-208 (DVNECVVYSGTPFGCQSGSTCVNTVGSFRCDCTPDTYGPQCA). The EGF-like 3; calcium-binding domain maps to 260 to 301 (DKDECSLQPSPCSEHAQCFNTQGSFYCGACPKGWQGNGYECQ). Residues 302 to 345 (DINECEINNGGCSQAPLVPCLNTPGSFSCGNCPAGFSGDGRVCT) enclose the EGF-like 4; calcium-binding domain. EGF-like domains lie at 346 to 385 (PVDI…YTGN) and 395 to 430 (LSNI…QNCT). Intrachain disulfides connect cysteine 350–cysteine 363, cysteine 357–cysteine 376, cysteine 399–cysteine 409, cysteine 404–cysteine 418, cysteine 420–cysteine 429, cysteine 436–cysteine 447, cysteine 441–cysteine 456, cysteine 458–cysteine 467, cysteine 474–cysteine 500, cysteine 527–cysteine 549, cysteine 590–cysteine 616, cysteine 643–cysteine 665, and cysteine 708–cysteine 734. N-linked (GlcNAc...) asparagine glycosylation occurs at asparagine 428. The 37-residue stretch at 432–468 (NINDCSSNPCLNGGTCIDGINGFTCDCTSSWTGYYCQ) folds into the EGF-like 7; calcium-binding domain. CUB domains are found at residues 474-586 (CGGI…WEAK), 590-702 (CGGI…YLTT), 708-816 (CGGN…YQVA), 817-928 (CGGM…FSSD), 932-1042 (CGEV…YEAI), 1048-1161 (CLYD…WDGS), 1165-1277 (CGGN…FRQR), 1278-1389 (CDNV…WFTH), 1391-1506 (CGGE…WRAV), 1510-1619 (CGGI…FREE), 1620-1734 (CGGR…YSAS), 1738-1850 (CGGS…FKNI), 1852-1963 (GNNN…WFAV), 1978-2091 (CGGF…FHKS), 2092-2213 (CGGY…YEAK), 2217-2334 (CGGT…YSIA), 2336-2448 (CGGT…FKSS), 2452-2565 (CGGD…YTST), 2570-2687 (CGGF…YSFT), 2689-2801 (CGGI…WTTN), 2805-2919 (CGGT…FISR), 2920-3035 (CGRT…YRAI), 3037-3150 (CGGI…FRET), 3157-3274 (CGGY…YTFV), 3278-3393 (CGGT…YQIA), 3395-3507 (CNRE…WTSS), and 3511-3623 (CGGT…MWSS). Asparagine 491 carries an N-linked (GlcNAc...) asparagine glycan. N-linked (GlcNAc...) asparagine glycosylation is found at asparagine 711 and asparagine 749. An intrachain disulfide couples cysteine 761 to cysteine 779. Asparagine 781 carries N-linked (GlcNAc...) asparagine glycosylation. Cysteine 817 and cysteine 842 are disulfide-bonded. Asparagine 857 is a glycosylation site (N-linked (GlcNAc...) asparagine). 2 disulfides stabilise this stretch: cysteine 869–cysteine 891 and cysteine 932–cysteine 958. N-linked (GlcNAc...) asparagine glycosylation is present at asparagine 957. Glutamate 980 is a binding site for Ca(2+). N-linked (GlcNAc...) asparagine glycosylation occurs at asparagine 984. A disulfide bridge connects residues cysteine 985 and cysteine 1005. Ca(2+) contacts are provided by aspartate 988, aspartate 1027, and leucine 1030. A disulfide bond links cysteine 1048 and cysteine 1074. Ca(2+) is bound by residues glutamate 1096, aspartate 1105, and aspartate 1146. An intrachain disulfide couples cysteine 1165 to cysteine 1191. Asparagine 1168 carries an N-linked (GlcNAc...) asparagine glycan. 5 residues coordinate Ca(2+): glutamate 1213, aspartate 1221, aspartate 1262, glycine 1264, and glutamine 1265. Cysteine 1218 and cysteine 1240 are disulfide-bonded. An intrachain disulfide couples cysteine 1278 to cysteine 1306. 3 N-linked (GlcNAc...) asparagine glycosylation sites follow: asparagine 1285, asparagine 1307, and asparagine 1319. Ca(2+) is bound at residue glutamate 1328. Asparagine 1332 is a glycosylation site (N-linked (GlcNAc...) asparagine). Residues cysteine 1333 and cysteine 1351 are joined by a disulfide bond. Ca(2+) contacts are provided by aspartate 1336, aspartate 1373, and isoleucine 1375. 2 disulfide bridges follow: cysteine 1391–cysteine 1417 and cysteine 1444–cysteine 1466. N-linked (GlcNAc...) asparagine glycosylation is present at asparagine 1500. A disulfide bond links cysteine 1510 and cysteine 1536. 3 N-linked (GlcNAc...) asparagine glycosylation sites follow: asparagine 1551, asparagine 1646, and asparagine 1671. Cysteines 1620 and 1647 form a disulfide. Disulfide bonds link cysteine 1675/cysteine 1697, cysteine 1738/cysteine 1764, and cysteine 1791/cysteine 1812. Asparagine 1802 and asparagine 1819 each carry an N-linked (GlcNAc...) asparagine glycan. 3 cysteine pairs are disulfide-bonded: cysteine 1905–cysteine 1927, cysteine 1978–cysteine 2006, and cysteine 2032–cysteine 2054. Residues asparagine 2085 and asparagine 2117 are each glycosylated (N-linked (GlcNAc...) asparagine). 2 cysteine pairs are disulfide-bonded: cysteine 2092/cysteine 2118 and cysteine 2217/cysteine 2247. Residue asparagine 2274 is glycosylated (N-linked (GlcNAc...) asparagine). Cystine bridges form between cysteine 2275/cysteine 2297, cysteine 2336/cysteine 2363, cysteine 2390/cysteine 2411, cysteine 2452/cysteine 2478, and cysteine 2505/cysteine 2527. N-linked (GlcNAc...) asparagine glycosylation occurs at asparagine 2400. Asparagine 2531, asparagine 2581, and asparagine 2610 each carry an N-linked (GlcNAc...) asparagine glycan. Residues cysteine 2570 and cysteine 2599 are joined by a disulfide bond. Intrachain disulfides connect cysteine 2628-cysteine 2649, cysteine 2689-cysteine 2715, cysteine 2742-cysteine 2764, cysteine 2805-cysteine 2831, cysteine 2860-cysteine 2883, cysteine 2920-cysteine 2946, and cysteine 2977-cysteine 2999. 4 N-linked (GlcNAc...) asparagine glycosylation sites follow: asparagine 2813, asparagine 2875, asparagine 2945, and asparagine 2989. Residue threonine 3008 is modified to Phosphothreonine. Cystine bridges form between cysteine 3037-cysteine 3064 and cysteine 3091-cysteine 3113. Asparagine 3042, asparagine 3106, asparagine 3125, and asparagine 3165 each carry an N-linked (GlcNAc...) asparagine glycan. Intrachain disulfides connect cysteine 3157–cysteine 3185 and cysteine 3215–cysteine 3237. N-linked (GlcNAc...) asparagine glycans are attached at residues asparagine 3268, asparagine 3283, and asparagine 3290. Disulfide bonds link cysteine 3278-cysteine 3306 and cysteine 3332-cysteine 3354. Asparagine 3357, asparagine 3400, and asparagine 3430 each carry an N-linked (GlcNAc...) asparagine glycan. Residues cysteine 3395 and cysteine 3421 are joined by a disulfide bond. Cystine bridges form between cysteine 3448-cysteine 3470, cysteine 3511-cysteine 3537, and cysteine 3564-cysteine 3586. Residue asparagine 3533 is glycosylated (N-linked (GlcNAc...) asparagine).

In terms of assembly, interacts with AMN. Component of the cubam complex composed of one CUBN trimer and one AMN chain. The cubam complex can dimerize. Interacts with LRP2 in a dual-receptor complex in a calcium-dependent manner. Found in a complex with PID1/PCLI1, LRP1 and CUBNI. Interacts with LRP1 and PID1/PCLI1. The precursor is cleaved by a trans-Golgi proteinase furin, removing a propeptide. In terms of processing, N-glycosylated. In terms of tissue distribution, expressed to intestinal, renal and yalk sac apical membranes. In kidney, expressed in the proximal tubule.

The protein localises to the cell membrane. It localises to the endosome membrane. The protein resides in the lysosome membrane. Its function is as follows. Endocytic receptor which plays a role in lipoprotein, vitamin and iron metabolism by facilitating their uptake. Acts together with LRP2 to mediate endocytosis of high-density lipoproteins, GC, hemoglobin, ALB, TF and SCGB1A1. Acts together with AMN to mediate endocytosis of the CBLIF-cobalamin complex. Binds to ALB, MB, Kappa and lambda-light chains, TF, hemoglobin, GC, SCGB1A1, APOA1, high density lipoprotein, and the CBLIF-cobalamin complex. Ligand binding requires calcium. Serves as important transporter in several absorptive epithelia, including intestine, renal proximal tubules and embryonic yolk sac. May play an important role in the development of the peri-implantation embryo through internalization of APOA1 and cholesterol. Binds to LGALS3 at the maternal-fetal interface. In Rattus norvegicus (Rat), this protein is Cubilin (Cubn).